The chain runs to 575 residues: Glycosyltransferase family 92 protein At1g27200 (575 aa).

Residues 22-44 (FLSQRYLILCFCCFFVLLFFLSS) form a helical membrane-spanning segment. Residues 293–540 (LCVCTMLWNQ…TEAIEPPDWK (248 aa)) enclose the GT92 domain.

Belongs to the glycosyltransferase 92 family.

The protein localises to the membrane. The protein is Glycosyltransferase family 92 protein At1g27200 of Arabidopsis thaliana (Mouse-ear cress).